A 305-amino-acid polypeptide reads, in one-letter code: Oxygen-dependent coproporphyrinogen-III oxidase (305 aa).

Serine 93 is a substrate binding site. Residues histidine 97 and histidine 107 each coordinate a divalent metal cation. Histidine 107 acts as the Proton donor in catalysis. 109-111 (NVR) lines the substrate pocket. Residues histidine 146 and histidine 176 each coordinate a divalent metal cation. Residues 241–276 (YVEFNLVYDRGTLFGLQSGGRTESILMSLPPQVRWG) form an important for dimerization region. 259 to 261 (GGR) lines the substrate pocket.

Belongs to the aerobic coproporphyrinogen-III oxidase family. As to quaternary structure, homodimer. Requires a divalent metal cation as cofactor.

Its subcellular location is the cytoplasm. It catalyses the reaction coproporphyrinogen III + O2 + 2 H(+) = protoporphyrinogen IX + 2 CO2 + 2 H2O. Its pathway is porphyrin-containing compound metabolism; protoporphyrin-IX biosynthesis; protoporphyrinogen-IX from coproporphyrinogen-III (O2 route): step 1/1. In terms of biological role, involved in the heme biosynthesis. Catalyzes the aerobic oxidative decarboxylation of propionate groups of rings A and B of coproporphyrinogen-III to yield the vinyl groups in protoporphyrinogen-IX. This is Oxygen-dependent coproporphyrinogen-III oxidase from Pseudomonas fluorescens (strain ATCC BAA-477 / NRRL B-23932 / Pf-5).